The following is a 75-amino-acid chain: Venom serine protease inhibitor BiVSPI (75 aa).

The first 20 residues, 1–20 (MSRILFVFLAVMAIFSTSFG), serve as a signal peptide directing secretion. 5 disulfides stabilise this stretch: cysteine 23–cysteine 55, cysteine 32–cysteine 51, cysteine 35–cysteine 47, cysteine 39–cysteine 75, and cysteine 57–cysteine 69. One can recognise a TIL domain in the interval 23-75 (CGLNEEFKSCGSCEPTCAKPRVTICTMECKIGCQCKSGYLRNGEGTCVLPEKC).

It belongs to the serine protease inhibitor-like (TIL domain-containing) family. In terms of processing, may be O-glycosylated. Expressed by the venom gland (at protein level) and expressed in fat body.

The protein resides in the secreted. The protein localises to the target cell membrane. Antimicrobial venom serine protease inhibitor. Exhibits inhibitory activity against chymotrypsin (IC(50)=19.56 nM, Ki=15.24 nM) and microbial serine proteases, such as subtilisin A (IC(50)=6.57 nM, Ki=6.83 nM) and proteinase K (IC(50)=7.11 nM, Ki=7.02 nM). Has not activity against trypsin, plasmin, tPA, thrombin, factor Xa or elastase. Binds and inhibits Gram-positive bacteria (B.subtilis (MIC=29.45 uM), B.thuringiensis (MIC=91.03 uM)) and the entomopathogenic fungus B.bassiana (MIC=30.09 uM) but not to E.coli. The protein is Venom serine protease inhibitor BiVSPI of Bombus ignitus (Bumblebee).